A 136-amino-acid chain; its full sequence is MKISLRAGERIYINGAVLRVDRKVSVELVNDVMFLLEGQIMQASDATTAMRQLYFIVQLMLMNPTDVRDASALYGQHHAALVAVCESREMLDGLVAIDELVGATRYFEALKRIRALFPVEQAILAGVATDIPFEAA.

This sequence belongs to the FlbT family.

Its function is as follows. Has a post-transcriptional repressor function in flagellum biogenesis. Associates with the 5'-UTR of fljK mRNA and promotes its degradation. The sequence is that of Probable flagellum biosynthesis repressor protein FlbT 2 from Bradyrhizobium diazoefficiens (strain JCM 10833 / BCRC 13528 / IAM 13628 / NBRC 14792 / USDA 110).